We begin with the raw amino-acid sequence, 156 residues long: MQLVIAAVGHKMPAWIESGFGEYAKRMPADCRVHLKEIKPVERSGSKTAETAMALERAKIEAALPKGARIIALDEHGKDLTSVQLAQLLTQWQQDGRDVAFIIGGADGLDAEFKKNADMLIRISSMTLPHGMVRVLLAEQLYRAWSITQNHPYHRV.

Residues Leu-73, Gly-104, and 123–128 contribute to the S-adenosyl-L-methionine site; that span reads ISSMTL.

It belongs to the RNA methyltransferase RlmH family. Homodimer.

The protein resides in the cytoplasm. The enzyme catalyses pseudouridine(1915) in 23S rRNA + S-adenosyl-L-methionine = N(3)-methylpseudouridine(1915) in 23S rRNA + S-adenosyl-L-homocysteine + H(+). Specifically methylates the pseudouridine at position 1915 (m3Psi1915) in 23S rRNA. The polypeptide is Ribosomal RNA large subunit methyltransferase H (Janthinobacterium sp. (strain Marseille) (Minibacterium massiliensis)).